A 140-amino-acid chain; its full sequence is Putative pre-16S rRNA nuclease (140 aa).

The protein belongs to the YqgF nuclease family.

It is found in the cytoplasm. In terms of biological role, could be a nuclease involved in processing of the 5'-end of pre-16S rRNA. The chain is Putative pre-16S rRNA nuclease from Halalkalibacterium halodurans (strain ATCC BAA-125 / DSM 18197 / FERM 7344 / JCM 9153 / C-125) (Bacillus halodurans).